The primary structure comprises 265 residues: Orotidine 5'-phosphate decarboxylase (265 aa).

Substrate is bound by residues D38, 60–62 (KTH), 92–101 (DRKFADIGKT), Y218, and R236. Catalysis depends on K94, which acts as the Proton donor.

Belongs to the OMP decarboxylase family.

The catalysed reaction is orotidine 5'-phosphate + H(+) = UMP + CO2. It participates in pyrimidine metabolism; UMP biosynthesis via de novo pathway; UMP from orotate: step 2/2. The chain is Orotidine 5'-phosphate decarboxylase (URA3) from Cyberlindnera fabianii (Yeast).